We begin with the raw amino-acid sequence, 131 residues long: Class I hydrophobin POH2 (131 aa).

Positions 1-21 (MFFRTSSLFTTIVAFTVMAAA) are cleaved as a signal peptide. 4 disulfides stabilise this stretch: C50–C110, C57–C104, C58–C91, and C111–C124. 2 N-linked (GlcNAc...) asparagine glycosylation sites follow: N115 and N128.

It belongs to the fungal hydrophobin family. Self-assembles to form functional amyloid fibrils called rodlets. Self-assembly into fibrillar rodlets occurs spontaneously at hydrophobic:hydrophilic interfaces and the rodlets further associate laterally to form amphipathic monolayers. Expressionn is switched off in the fruiting bodies but abundantly expressed in the vegetative mycelium of both monokaryon and dikaryon.

The protein resides in the secreted. It is found in the cell wall. Its function is as follows. Aerial growth, conidiation, and dispersal of filamentous fungi in the environment rely upon a capability of their secreting small amphipathic proteins called hydrophobins (HPBs) with low sequence identity. Class I can self-assemble into an outermost layer of rodlet bundles on aerial cell surfaces, conferring cellular hydrophobicity that supports fungal growth, development and dispersal; whereas Class II form highly ordered films at water-air interfaces through intermolecular interactions but contribute nothing to the rodlet structure. POH2 is a class I hydrophobin that causes a large drop in the water-surface tension, enabling hyphae to breach the interface and grow into the air, in both the primary and the secondary mycelium. In the latter mycelium POH2 maight also play a role in the emergence of fruiting bodies. Secreted POH2 could also play a role in facilitating lignin degradation. The sequence is that of Class I hydrophobin POH2 from Pleurotus ostreatus (Oyster mushroom).